Consider the following 319-residue polypeptide: Secreted effector protein sopD2 (319 aa).

Residues 37–44 (WDRFKDCF) carry the Required to target late endocytic compartments motif.

It belongs to the SopD family.

Its subcellular location is the secreted. It is found in the host cell membrane. Effector proteins function to alter host cell physiology and promote bacterial survival in host tissues. Contributes to the formation of Salmonella-induced filaments (Sifs) in infected epithelial cells and to replication in macrophages. In Salmonella typhimurium (strain LT2 / SGSC1412 / ATCC 700720), this protein is Secreted effector protein sopD2 (sopD2).